The following is a 68-amino-acid chain: Protein RH1 (68 aa).

This Pantherophis guttatus (Corn snake) protein is Protein RH1.